The following is a 618-amino-acid chain: Glutamine--fructose-6-phosphate aminotransferase [isomerizing] (618 aa).

Cys-2 acts as the Nucleophile; for GATase activity in catalysis. In terms of domain architecture, Glutamine amidotransferase type-2 spans 2-226; sequence CGIVGYAGRN…DFETAVLSPT (225 aa). The interval 69-94 is disordered; it reads HTRWATHGRPSTKNAHPHNSGGNPGK. SIS domains follow at residues 295-434 and 467-608; these read SEDE…VRDR and CAEG…IDKP. Lys-613 serves as the catalytic For Fru-6P isomerization activity.

Homodimer.

The protein localises to the cytoplasm. It carries out the reaction D-fructose 6-phosphate + L-glutamine = D-glucosamine 6-phosphate + L-glutamate. Functionally, catalyzes the first step in hexosamine metabolism, converting fructose-6P into glucosamine-6P using glutamine as a nitrogen source. The protein is Glutamine--fructose-6-phosphate aminotransferase [isomerizing] of Methanosarcina acetivorans (strain ATCC 35395 / DSM 2834 / JCM 12185 / C2A).